The sequence spans 131 residues: Large ribosomal subunit protein bL12 (131 aa).

This sequence belongs to the bacterial ribosomal protein bL12 family. As to quaternary structure, homodimer. Part of the ribosomal stalk of the 50S ribosomal subunit. Forms a multimeric L10(L12)X complex, where L10 forms an elongated spine to which 2 to 4 L12 dimers bind in a sequential fashion. Binds GTP-bound translation factors.

Forms part of the ribosomal stalk which helps the ribosome interact with GTP-bound translation factors. Is thus essential for accurate translation. This is Large ribosomal subunit protein bL12 from Tropheryma whipplei (strain Twist) (Whipple's bacillus).